A 469-amino-acid chain; its full sequence is COP9 signalosome complex subunit 5 (469 aa).

One can recognise an MPN domain in the interval 63-200 (TYISSLALCK…IGAFRTFPDN (138 aa)). 3 residues coordinate Zn(2+): H146, H148, and D159. Positions 146–159 (HSHPGYGCWLSGID) match the JAMM motif motif. Disordered regions lie at residues 201 to 220 (YKSP…PPSK) and 331 to 404 (YDSF…KRPM). The span at 344-353 (DEMDDESDLD) shows a compositional bias: acidic residues.

Belongs to the peptidase M67A family. CSN5 subfamily. As to quaternary structure, component of the COP9 signalosome (CSN) complex.

It is found in the cytoplasm. It localises to the nucleus. Its function is as follows. Catalytic Component of the COP9 signalosome (CSN) complex that acts as an regulator of the ubiquitin (Ubl) conjugation pathway by mediating the deneddylation of the cullin subunit of SCF-type E3 ubiquitin-protein ligase complexes. The CSN complex is involved in the regulation of the mating pheromone response. In Debaryomyces hansenii (strain ATCC 36239 / CBS 767 / BCRC 21394 / JCM 1990 / NBRC 0083 / IGC 2968) (Yeast), this protein is COP9 signalosome complex subunit 5 (RRI1).